Consider the following 365-residue polypeptide: 4-hydroxy-3-methylbut-2-en-1-yl diphosphate synthase (flavodoxin) (365 aa).

Cys-270, Cys-273, Cys-305, and Glu-312 together coordinate [4Fe-4S] cluster.

It belongs to the IspG family. It depends on [4Fe-4S] cluster as a cofactor.

It catalyses the reaction (2E)-4-hydroxy-3-methylbut-2-enyl diphosphate + 2 oxidized [2Fe-2S]-[ferredoxin] + H2O = 2-C-methyl-D-erythritol 2,4-cyclic diphosphate + 2 reduced [2Fe-2S]-[ferredoxin] + H(+). The enzyme catalyses (2E)-4-hydroxy-3-methylbut-2-enyl diphosphate + oxidized [flavodoxin] + H2O + 2 H(+) = 2-C-methyl-D-erythritol 2,4-cyclic diphosphate + reduced [flavodoxin]. It functions in the pathway isoprenoid biosynthesis; isopentenyl diphosphate biosynthesis via DXP pathway; isopentenyl diphosphate from 1-deoxy-D-xylulose 5-phosphate: step 5/6. In terms of biological role, converts 2C-methyl-D-erythritol 2,4-cyclodiphosphate (ME-2,4cPP) into 1-hydroxy-2-methyl-2-(E)-butenyl 4-diphosphate. Involved in density-dependent regulation of 2'-N-acetyltransferase. The polypeptide is 4-hydroxy-3-methylbut-2-en-1-yl diphosphate synthase (flavodoxin) (Providencia stuartii).